The primary structure comprises 726 residues: Catalase-peroxidase (726 aa).

Positions 1–33 are disordered; the sequence is MSTSDDIHNTTATGKCPFHQGGHDQSAGAGTTT. Positions 105–226 form a cross-link, tryptophyl-tyrosyl-methioninium (Trp-Tyr) (with M-252); the sequence is WHGAGTYRSI…LGATEMGLIY (122 aa). His106 serves as the catalytic Proton acceptor. Positions 226–252 form a cross-link, tryptophyl-tyrosyl-methioninium (Tyr-Met) (with W-105); the sequence is YVNPEGPDHSGEPLSAAAAIRATFGNM. His267 contacts heme b.

It belongs to the peroxidase family. Peroxidase/catalase subfamily. Homodimer or homotetramer. Heme b is required as a cofactor. Post-translationally, formation of the three residue Trp-Tyr-Met cross-link is important for the catalase, but not the peroxidase activity of the enzyme.

It catalyses the reaction H2O2 + AH2 = A + 2 H2O. The catalysed reaction is 2 H2O2 = O2 + 2 H2O. Its function is as follows. Bifunctional enzyme with both catalase and broad-spectrum peroxidase activity. This is Catalase-peroxidase from Escherichia coli (strain K12 / DH10B).